A 321-amino-acid chain; its full sequence is Pheromone-regulated membrane protein 5 (321 aa).

Residues 35–59 (SSSSSSSSLPLLSNSTSSSIIPSIT) form a disordered region. A helical membrane pass occupies residues 81-101 (FIIVGGIAGVIFLAILLWWVI). Position 132 is a phosphoserine (serine 132). A compositionally biased stretch (low complexity) spans 241–250 (TISSSSASSL). The segment at 241 to 321 (TISSSSASSL…HMLEGKEQDE (81 aa)) is disordered. Residues 253-264 (GNEKEVGEDIRK) are compositionally biased toward basic and acidic residues. Polar residues predominate over residues 279-288 (SPESDGSVNR). Phosphoserine occurs at positions 282, 285, and 291. Basic and acidic residues predominate over residues 312–321 (HMLEGKEQDE). Lysine 317 is covalently cross-linked (Glycyl lysine isopeptide (Lys-Gly) (interchain with G-Cter in ubiquitin)).

It belongs to the PRM5 family.

Its subcellular location is the membrane. The protein is Pheromone-regulated membrane protein 5 (PRM5) of Saccharomyces cerevisiae (strain YJM789) (Baker's yeast).